The primary structure comprises 890 residues: Calcium-transporting ATPase (890 aa).

At 1 to 47 (MKFHEMGQTDLLEATNTSMKQGLTEKEVKKRLDKHGPNELQEGKKTS) the chain is on the cytoplasmic side. The helical transmembrane segment at 48–68 (ALLLFFAQFKDFMVLVLLAAT) threads the bilayer. The Extracellular segment spans residues 69–78 (LISGFLGEYV). The chain crosses the membrane as a helical span at residues 79–99 (DAVAIIAIVFVNGILGFFQER). At 100–238 (RAEQSLQALK…TLSTPLQRRL (139 aa)) the chain is on the cytoplasmic side. The helical transmembrane segment at 239–258 (EQLGKILIVVALLLTVLVVA) threads the bilayer. Over 259 to 270 (VGVIQGHDLYSM) the chain is Extracellular. A helical transmembrane segment spans residues 271-288 (FLAGVSLAVAAIPEGLPA). Ca(2+)-binding residues include Val279, Ala280, Ile282, and Glu284. Residues 289–688 (IVTVALSLGV…KEGRNIYENI (400 aa)) lie on the Cytoplasmic side of the membrane. Catalysis depends on Asp326, which acts as the 4-aspartylphosphate intermediate. Positions 633 and 637 each coordinate Mg(2+). Residues 689–708 (RKFIRYLLASNVGEILVMLF) form a helical membrane-spanning segment. 2 residues coordinate Ca(2+): Asn699 and Glu702. Residues 709–718 (AMLLALPLPL) lie on the Extracellular side of the membrane. The chain crosses the membrane as a helical span at residues 719–739 (VPIQILWVNLVTDGLPAMALG). Ca(2+) is bound by residues Asn727, Thr730, and Asp731. Over 740–759 (MDQPEGDVMKRKPRHPKEGV) the chain is Cytoplasmic. The helical transmembrane segment at 760–782 (FARKLGWKVVSRGFLIGVATILA) threads the bilayer. Over 783-798 (FIIVYHRNPENLAYAQ) the chain is Extracellular. Residues 799–818 (TIAFATLVLAQLIHVFDCRS) form a helical membrane-spanning segment. At 819–830 (ETSVFSRNPFQN) the chain is on the cytoplasmic side. A helical transmembrane segment spans residues 831 to 849 (LYLIGAVLSSILLMLVVIY). The Extracellular segment spans residues 850–864 (YPPLQPIFHTVAITP). Residues 865–885 (GDWMLVIGMSAIPTFLLAGSL) traverse the membrane as a helical segment. Residues 886–890 (LTRKK) lie on the Cytoplasmic side of the membrane.

The protein belongs to the cation transport ATPase (P-type) (TC 3.A.3) family. Type IIA subfamily. In terms of processing, phosphorylated in a Ca(2+)-dependent manner starting 4 hours after shifting to sporulation medium.

The protein resides in the cell membrane. It catalyses the reaction Ca(2+)(in) + ATP + H2O = Ca(2+)(out) + ADP + phosphate + H(+). In terms of biological role, this magnesium-dependent enzyme catalyzes the hydrolysis of ATP coupled with the transport of calcium. The polypeptide is Calcium-transporting ATPase (yloB) (Bacillus subtilis (strain 168)).